We begin with the raw amino-acid sequence, 814 residues long: Glycogen phosphorylase (814 aa).

Position 662 is an N6-(pyridoxal phosphate)lysine (lysine 662).

Belongs to the glycogen phosphorylase family. Requires pyridoxal 5'-phosphate as cofactor.

It carries out the reaction [(1-&gt;4)-alpha-D-glucosyl](n) + phosphate = [(1-&gt;4)-alpha-D-glucosyl](n-1) + alpha-D-glucose 1-phosphate. Phosphorylase is an important allosteric enzyme in carbohydrate metabolism. Enzymes from different sources differ in their regulatory mechanisms and in their natural substrates. However, all known phosphorylases share catalytic and structural properties. The sequence is that of Glycogen phosphorylase (glgP) from Chlamydia trachomatis serovar D (strain ATCC VR-885 / DSM 19411 / UW-3/Cx).